The primary structure comprises 158 residues: Protein OPG060 (158 aa).

This sequence belongs to the orthopoxvirus OPG058 family.

This is Protein OPG060 (OPG060) from Homo sapiens (Human).